Reading from the N-terminus, the 307-residue chain is MKFLFVVDPIKNINPLKDSSAALMQASSKKKIEVWICTPQDLEARGDEVWASSWRAEVCPWVSFKENKCIPLAEFNCIWMRKDPPVNEGYLYATHLLEVAERKGVKVINKPSSLRAWNEKLGALRYSHLMAPTIVASKVKDLINFAQINHDVVVKPLGGKGGQGVIRLTKDSPGIKAMIELITSQEQLPVMMQKFIPEVKEGDKRIIIVNGEPIGSINRIPQGGDFRSNLAMGGKAEKTNLTAKEKKICTELSQHFKDEGLFFVGIDVINEMLSEINVTSPTGLREIETLSNKSVSDKVIEKLLEII.

The ATP-grasp domain maps to 120-304 (KLGALRYSHL…VSDKVIEKLL (185 aa)). 146–202 (AQINHDVVVKPLGGKGGQGVIRLTKDSPGIKAMIELITSQEQLPVMMQKFIPEVKEG) lines the ATP pocket. 2 residues coordinate Mg(2+): Glu275 and Asn277.

It belongs to the prokaryotic GSH synthase family. It depends on Mg(2+) as a cofactor. Requires Mn(2+) as cofactor.

The enzyme catalyses gamma-L-glutamyl-L-cysteine + glycine + ATP = glutathione + ADP + phosphate + H(+). The protein operates within sulfur metabolism; glutathione biosynthesis; glutathione from L-cysteine and L-glutamate: step 2/2. The chain is Glutathione synthetase from Prochlorococcus marinus subsp. pastoris (strain CCMP1986 / NIES-2087 / MED4).